Consider the following 204-residue polypeptide: dITP/XTP pyrophosphatase (204 aa).

A substrate-binding site is contributed by 8–13; sequence SNNAKK. Mg(2+) contacts are provided by Glu-43 and Asp-72. Asp-72 (proton acceptor) is an active-site residue. Residues Ser-73, 155–158, Lys-180, and 185–186 contribute to the substrate site; these read FGYD and HR.

The protein belongs to the HAM1 NTPase family. As to quaternary structure, homodimer. Mg(2+) is required as a cofactor.

It catalyses the reaction XTP + H2O = XMP + diphosphate + H(+). The catalysed reaction is dITP + H2O = dIMP + diphosphate + H(+). The enzyme catalyses ITP + H2O = IMP + diphosphate + H(+). Functionally, pyrophosphatase that catalyzes the hydrolysis of nucleoside triphosphates to their monophosphate derivatives, with a high preference for the non-canonical purine nucleotides XTP (xanthosine triphosphate), dITP (deoxyinosine triphosphate) and ITP. Seems to function as a house-cleaning enzyme that removes non-canonical purine nucleotides from the nucleotide pool, thus preventing their incorporation into DNA/RNA and avoiding chromosomal lesions. This Cutibacterium acnes (strain DSM 16379 / KPA171202) (Propionibacterium acnes) protein is dITP/XTP pyrophosphatase.